Consider the following 143-residue polypeptide: 3-dehydroquinate dehydratase (143 aa).

The active-site Proton acceptor is the Tyr-22. Substrate contacts are provided by Asn-73, His-79, and Asp-86. His-99 functions as the Proton donor in the catalytic mechanism. Residues 100–101 and Arg-110 contribute to the substrate site; that span reads IS.

The protein belongs to the type-II 3-dehydroquinase family. In terms of assembly, homododecamer.

The enzyme catalyses 3-dehydroquinate = 3-dehydroshikimate + H2O. Its pathway is metabolic intermediate biosynthesis; chorismate biosynthesis; chorismate from D-erythrose 4-phosphate and phosphoenolpyruvate: step 3/7. Functionally, catalyzes a trans-dehydration via an enolate intermediate. In Mycobacterium avium (strain 104), this protein is 3-dehydroquinate dehydratase.